Here is a 138-residue protein sequence, read N- to C-terminus: Putative pre-16S rRNA nuclease (138 aa).

This sequence belongs to the YqgF nuclease family.

The protein localises to the cytoplasm. Could be a nuclease involved in processing of the 5'-end of pre-16S rRNA. This Shigella dysenteriae serotype 1 (strain Sd197) protein is Putative pre-16S rRNA nuclease.